A 405-amino-acid polypeptide reads, in one-letter code: L-carnitine CoA-transferase (405 aa).

CoA is bound by residues Lys-97 and Arg-104. The active-site Nucleophile is Asp-169.

It belongs to the CoA-transferase III family. CaiB subfamily. As to quaternary structure, homodimer.

The protein localises to the cytoplasm. It carries out the reaction crotonobetainyl-CoA + (R)-carnitine = crotonobetaine + (R)-carnitinyl-CoA. It catalyses the reaction 4-(trimethylamino)butanoyl-CoA + (R)-carnitine = (R)-carnitinyl-CoA + 4-(trimethylamino)butanoate. Its pathway is amine and polyamine metabolism; carnitine metabolism. In terms of biological role, catalyzes the reversible transfer of the CoA moiety from gamma-butyrobetainyl-CoA to L-carnitine to generate L-carnitinyl-CoA and gamma-butyrobetaine. Is also able to catalyze the reversible transfer of the CoA moiety from gamma-butyrobetainyl-CoA or L-carnitinyl-CoA to crotonobetaine to generate crotonobetainyl-CoA. The chain is L-carnitine CoA-transferase from Escherichia coli (strain 55989 / EAEC).